The primary structure comprises 530 residues: Tegument protein UL21 homolog (530 aa).

This sequence belongs to the alphaherpesvirinae UL21 protein family. In terms of assembly, interacts (via C-terminus) with UL16.

Its subcellular location is the virion tegument. It localises to the host cytoplasm. The protein localises to the host nucleus. Functionally, may participate in DNA packaging/capsid maturation events. Promotes efficient incorporation of tegument proteins UL46, UL49, and US3 homologs into virions. May also play a role in capsid transport to the trans-Golgi network (TGN). The chain is Tegument protein UL21 homolog from Equus caballus (Horse).